The chain runs to 427 residues: Nuclear distribution protein PAC1-2 (427 aa).

The LisH domain maps to 8-40; that stretch reads QKDDLNKSIAEYLYAQDLTEIADSLCARLSLDY. Residues 58-82 are a coiled coil; it reads SVIRLQKKLIESENRYTALQEDIAA. 7 WD repeats span residues 106–147, 149–187, 194–233, 236–275, 278–336, 339–378, and 381–420; these read SHRA…RTLK, HTRE…NAGY, GHEH…CIRT, GHED…MKME, GHGH…ELRT, GHND…CMXV, and AHSH…SRIM.

The protein belongs to the WD repeat LIS1/nudF family. Self-associates. Interacts with NDL1 and dynein.

Its subcellular location is the cytoplasm. It is found in the cytoskeleton. It localises to the spindle pole. In terms of biological role, positively regulates the activity of the minus-end directed microtubule motor protein dynein. May enhance dynein-mediated microtubule sliding by targeting dynein to the microtubule plus end. Required for nuclear migration during vegetative growth as well as development. Required for retrograde early endosome (EE) transport from the hyphal tip. Required for localization of dynein to the mitotic spindle poles. Recruits additional proteins to the dynein complex at SPBs. In Postia placenta (strain ATCC 44394 / Madison 698-R) (Brown rot fungus), this protein is Nuclear distribution protein PAC1-2.